The following is a 227-amino-acid chain: Translation initiation factor 6 (227 aa).

This sequence belongs to the eIF-6 family.

Its function is as follows. Binds to the 50S ribosomal subunit and prevents its association with the 30S ribosomal subunit to form the 70S initiation complex. In Methanococcus maripaludis (strain DSM 14266 / JCM 13030 / NBRC 101832 / S2 / LL), this protein is Translation initiation factor 6.